A 224-amino-acid polypeptide reads, in one-letter code: 4'-phosphopantetheinyl transferase (224 aa).

The Mg(2+) site is built by aspartate 107, glutamate 109, and glutamate 151. The tract at residues 158–189 is peptidyl carrier protein binding; that stretch reads GKGLSLPLDSFSVRLKDDGHVSIELPDGHEPC.

Belongs to the P-Pant transferase superfamily. Gsp/Sfp/HetI/AcpT family. Mg(2+) is required as a cofactor.

The catalysed reaction is apo-[peptidyl-carrier protein] + CoA = holo-[peptidyl-carrier protein] + adenosine 3',5'-bisphosphate + H(+). In terms of biological role, may activate the peptidyl carrier protein (PCP) domains of surfactin synthetase SRF1/2/3 and iturin A synthetase, by transferring the 4'-phosphopantetheinyl moiety of coenzyme A (CoA) to a serine residue. Required for the coproduction of the lipopeptide antibiotics, iturin A and surfactin. This Bacillus subtilis protein is 4'-phosphopantetheinyl transferase (lpa-14).